Consider the following 410-residue polypeptide: Adenosine receptor A2a (410 aa).

The Extracellular segment spans residues M1–S4. A helical transmembrane segment spans residues V5–W29. Residues I30–N39 lie on the Cytoplasmic side of the membrane. A helical membrane pass occupies residues F40–I63. The Extracellular portion of the chain corresponds to S64 to C74. Disulfide bonds link C68/C154, C71/C143, and C74/C161. A helical transmembrane segment spans residues L75–I97. Residues D98–R117 are Cytoplasmic-facing. A helical membrane pass occupies residues A118–W140. At N141 to P168 the chain is on the extracellular side. N-linked (GlcNAc...) asparagine glycosylation is found at N142 and N149. E164 is a binding site for adenosine. The helical transmembrane segment at M169 to L193 threads the bilayer. At R194–S229 the chain is on the cytoplasmic side. Residues L230–F253 form a helical membrane-spanning segment. Residue N248 participates in adenosine binding. Cysteines 254 and 257 form a disulfide. Topologically, residues C254–P261 are extracellular. Residues P262 to Y285 traverse the membrane as a helical segment. Adenosine is bound by residues S272 and H273. At R286–S410 the chain is on the cytoplasmic side. Residues H322–S410 form an interaction with GAS2L2 region. The tract at residues G344 to S410 is disordered. The segment covering R371–G388 has biased composition (basic and acidic residues). The span at S401–S410 shows a compositional bias: polar residues.

The protein belongs to the G-protein coupled receptor 1 family. As to quaternary structure, interacts (via cytoplasmic C-terminal domain) with USP4; the interaction is direct. May interact with DRD4. Interacts with NECAB2. Interacts (via cytoplasmic C-terminal domain) with GAS2L2; interaction enhances receptor-mediated adenylyl cyclase activity. In terms of processing, ubiquitinated. Deubiquitinated by USP4; leading to stabilization and expression at the cell surface. Expressed in striatal neurons (at protein level).

It is found in the cell membrane. Functionally, receptor for adenosine. The activity of this receptor is mediated by G proteins which activate adenylyl cyclase. In Rattus norvegicus (Rat), this protein is Adenosine receptor A2a (Adora2a).